The chain runs to 37 residues: Large ribosomal subunit protein bL36 (37 aa).

It belongs to the bacterial ribosomal protein bL36 family.

The chain is Large ribosomal subunit protein bL36 from Polaromonas naphthalenivorans (strain CJ2).